The sequence spans 305 residues: Oxygen-dependent coproporphyrinogen-III oxidase (305 aa).

Position 98 (Ser-98) interacts with substrate. The a divalent metal cation site is built by His-102 and His-112. Catalysis depends on His-112, which acts as the Proton donor. Asn-114 to Arg-116 lines the substrate pocket. A divalent metal cation-binding residues include His-151 and His-181. The interval Tyr-246–Glu-281 is important for dimerization. Residue Gly-264–Arg-266 participates in substrate binding.

This sequence belongs to the aerobic coproporphyrinogen-III oxidase family. As to quaternary structure, homodimer. The cofactor is a divalent metal cation.

The protein localises to the cytoplasm. The enzyme catalyses coproporphyrinogen III + O2 + 2 H(+) = protoporphyrinogen IX + 2 CO2 + 2 H2O. It participates in porphyrin-containing compound metabolism; protoporphyrin-IX biosynthesis; protoporphyrinogen-IX from coproporphyrinogen-III (O2 route): step 1/1. In terms of biological role, involved in the heme biosynthesis. Catalyzes the aerobic oxidative decarboxylation of propionate groups of rings A and B of coproporphyrinogen-III to yield the vinyl groups in protoporphyrinogen-IX. The polypeptide is Oxygen-dependent coproporphyrinogen-III oxidase (Vibrio vulnificus (strain YJ016)).